The chain runs to 152 residues: Small ribosomal subunit protein uS15 (152 aa).

A disordered region spans residues 1 to 20 (MNKRRANGSSHSTRPVRTGS).

This sequence belongs to the universal ribosomal protein uS15 family. In terms of assembly, part of the 30S ribosomal subunit.

The protein is Small ribosomal subunit protein uS15 of Metallosphaera sedula (strain ATCC 51363 / DSM 5348 / JCM 9185 / NBRC 15509 / TH2).